The primary structure comprises 410 residues: Multifunctional CCA protein (410 aa).

ATP is bound by residues glycine 8 and arginine 11. Glycine 8 and arginine 11 together coordinate CTP. Mg(2+)-binding residues include aspartate 21 and aspartate 23. Arginine 91, arginine 143, and arginine 146 together coordinate ATP. Positions 91, 143, and 146 each coordinate CTP. One can recognise an HD domain in the interval 232–333 (TGVHVMMVVD…VRLLERSDAI (102 aa)).

It belongs to the tRNA nucleotidyltransferase/poly(A) polymerase family. Bacterial CCA-adding enzyme type 1 subfamily. As to quaternary structure, monomer. Can also form homodimers and oligomers. The cofactor is Mg(2+). Ni(2+) serves as cofactor.

It carries out the reaction a tRNA precursor + 2 CTP + ATP = a tRNA with a 3' CCA end + 3 diphosphate. The catalysed reaction is a tRNA with a 3' CCA end + 2 CTP + ATP = a tRNA with a 3' CCACCA end + 3 diphosphate. Catalyzes the addition and repair of the essential 3'-terminal CCA sequence in tRNAs without using a nucleic acid template. Adds these three nucleotides in the order of C, C, and A to the tRNA nucleotide-73, using CTP and ATP as substrates and producing inorganic pyrophosphate. tRNA 3'-terminal CCA addition is required both for tRNA processing and repair. Also involved in tRNA surveillance by mediating tandem CCA addition to generate a CCACCA at the 3' terminus of unstable tRNAs. While stable tRNAs receive only 3'-terminal CCA, unstable tRNAs are marked with CCACCA and rapidly degraded. The protein is Multifunctional CCA protein of Paraburkholderia phytofirmans (strain DSM 17436 / LMG 22146 / PsJN) (Burkholderia phytofirmans).